We begin with the raw amino-acid sequence, 309 residues long: Homoserine kinase (309 aa).

91-101 (PIGSGLGSSAC) provides a ligand contact to ATP.

This sequence belongs to the GHMP kinase family. Homoserine kinase subfamily.

It is found in the cytoplasm. It carries out the reaction L-homoserine + ATP = O-phospho-L-homoserine + ADP + H(+). Its pathway is amino-acid biosynthesis; L-threonine biosynthesis; L-threonine from L-aspartate: step 4/5. In terms of biological role, catalyzes the ATP-dependent phosphorylation of L-homoserine to L-homoserine phosphate. This chain is Homoserine kinase, found in Pectobacterium carotovorum subsp. carotovorum (strain PC1).